We begin with the raw amino-acid sequence, 432 residues long: Ribosomal protein uS12 methylthiotransferase RimO (432 aa).

In terms of domain architecture, MTTase N-terminal spans 4 to 120 (HNVFLLSLGC…LLQAIGAQYR (117 aa)). Residues C13, C49, C83, C144, C148, and C151 each contribute to the [4Fe-4S] cluster site. A Radical SAM core domain is found at 130–359 (LTPPHISYLK…MELQETIAKE (230 aa)). The TRAM domain maps to 362–429 (QLFEGKELTV…AYELHGTITA (68 aa)).

Belongs to the methylthiotransferase family. RimO subfamily. [4Fe-4S] cluster serves as cofactor.

It localises to the cytoplasm. The enzyme catalyses L-aspartate(89)-[ribosomal protein uS12]-hydrogen + (sulfur carrier)-SH + AH2 + 2 S-adenosyl-L-methionine = 3-methylsulfanyl-L-aspartate(89)-[ribosomal protein uS12]-hydrogen + (sulfur carrier)-H + 5'-deoxyadenosine + L-methionine + A + S-adenosyl-L-homocysteine + 2 H(+). Its function is as follows. Catalyzes the methylthiolation of an aspartic acid residue of ribosomal protein uS12. The polypeptide is Ribosomal protein uS12 methylthiotransferase RimO (Chlorobium phaeobacteroides (strain DSM 266 / SMG 266 / 2430)).